The sequence spans 295 residues: tRNA dimethylallyltransferase (295 aa).

ATP is bound at residue 11 to 18 (GPTVSGKS). 13-18 (TVSGKS) serves as a coordination point for substrate. Interaction with substrate tRNA regions lie at residues 36–39 (DSMQ) and 158–162 (QRIIR).

This sequence belongs to the IPP transferase family. As to quaternary structure, monomer. Mg(2+) serves as cofactor.

It catalyses the reaction adenosine(37) in tRNA + dimethylallyl diphosphate = N(6)-dimethylallyladenosine(37) in tRNA + diphosphate. Its function is as follows. Catalyzes the transfer of a dimethylallyl group onto the adenine at position 37 in tRNAs that read codons beginning with uridine, leading to the formation of N6-(dimethylallyl)adenosine (i(6)A). The chain is tRNA dimethylallyltransferase from Bartonella quintana (strain Toulouse) (Rochalimaea quintana).